The following is a 223-amino-acid chain: Ras-related protein RABA4c (223 aa).

Position 22–29 (22–29) interacts with GTP; sequence GDSAVGKS. Positions 44 to 52 match the Effector region motif; that stretch reads SKATIGVEF. Residues 70–74, 128–131, and 158–159 contribute to the GTP site; these read DTAGQ, NKTD, and SA. 2 S-geranylgeranyl cysteine lipidation sites follow: Cys-219 and Cys-220.

The protein belongs to the small GTPase superfamily. Rab family.

The protein localises to the cell membrane. In terms of biological role, intracellular vesicle trafficking and protein transport. The chain is Ras-related protein RABA4c (RABA4C) from Arabidopsis thaliana (Mouse-ear cress).